A 152-amino-acid chain; its full sequence is Superoxide dismutase [Cu-Zn] (152 aa).

Positions 45, 47, and 62 each coordinate Cu cation. The cysteines at positions 56 and 145 are disulfide-linked. Residues His-62, His-70, His-79, and Asp-82 each contribute to the Zn(2+) site. Residue His-119 coordinates Cu cation.

It belongs to the Cu-Zn superoxide dismutase family. Homodimer. The cofactor is Cu cation. It depends on Zn(2+) as a cofactor.

The protein localises to the cytoplasm. It catalyses the reaction 2 superoxide + 2 H(+) = H2O2 + O2. Its function is as follows. Destroys radicals which are normally produced within the cells and which are toxic to biological systems. This chain is Superoxide dismutase [Cu-Zn] (SODCC), found in Capsicum annuum (Capsicum pepper).